The sequence spans 90 residues: Protein Z600 (90 aa).

A phosphothreonine mark is found at threonine 22 and threonine 48. Positions 46-65 are disordered; it reads PATPSSSGHGKFQTELKKRR.

In terms of assembly, component of the Frs-CycA-Cdk1 complex composed of Z600, CycA and Cdk1. Interacts preferentially with CycA (via C-terminus) but is also able to interact (via C-terminus) with CycE (via C-terminus).

It localises to the nucleus. Cell cycle regulator that is involved in modulating and adjusting cell proliferation according to the requirements of the developmental program. Interacts with mitotic Cdk1-cyclin complexes to inhibit mitotic entry at the G2/M transition. Likely to function by binding to the hydrophobic patch of cyclins to interfere with the interaction between the complex and certain Cdk1 substrates. At the mid-blastula transition, involved in the cell cycle arrest in G2 of cycle 14 by delaying mitosis and thus reducing cell proliferation allowing cell fate specification and morphogenesis to take place. Acts downstream or in parallel to the checkpoint regulator grp which is also required for the cell cycle pause at cycle 14. During gastrulation, delays mitosis in the ventral region of the embryonic mesoderm thus allowing invagination to be completed before cell division takes place. This is Protein Z600 from Drosophila melanogaster (Fruit fly).